Consider the following 299-residue polypeptide: MSEPIDLSQISPSLKAEILAEALPYIRRYHGKTVVIKYGGNAMTEERLKQGFARDVILLKLVGINPVIVHGGGPQIDQALKKIGKQGTFIQGMRVTDEETMEVVEWVLGGEVQQDIVTLINHFGGHAVGLTGKDGGLIHARKLMMPDRDNPGEYVDIGQVGEVEAINPAVVRALQDDAFIPVISPIGFGEDGLSYNINADLVAGKLATVLNAEKLVMMTNIPGVMDKEGNLLTDLSAREIDALFEDGTISGGMLPKISSALDAAKSGVKSVHIVDGRIEHSVLLEILTEQPFGTMIRSH.

Substrate-binding positions include 72-73 (GG), Arg-94, and Asn-196.

Belongs to the acetylglutamate kinase family. ArgB subfamily.

The protein resides in the cytoplasm. The enzyme catalyses N-acetyl-L-glutamate + ATP = N-acetyl-L-glutamyl 5-phosphate + ADP. It functions in the pathway amino-acid biosynthesis; L-arginine biosynthesis; N(2)-acetyl-L-ornithine from L-glutamate: step 2/4. Functionally, catalyzes the ATP-dependent phosphorylation of N-acetyl-L-glutamate. The chain is Acetylglutamate kinase from Burkholderia thailandensis (strain ATCC 700388 / DSM 13276 / CCUG 48851 / CIP 106301 / E264).